Reading from the N-terminus, the 59-residue chain is UPF0181 protein YoaH (59 aa).

Belongs to the UPF0181 family.

In Escherichia coli O127:H6 (strain E2348/69 / EPEC), this protein is UPF0181 protein YoaH.